The primary structure comprises 209 residues: Glycerol-3-phosphate acyltransferase (209 aa).

The next 5 helical transmembrane spans lie at 4-24 (IAIGMIIFAYLCGSVSNAILI), 53-75 (LAAAGVMVFDVLKGMIPVWIGYG), 80-102 (PFWLGLVAIAACLGHIYPIFFHF), 112-132 (LGAIAPIGYDLSGLMIGTWLL), and 138-158 (GYSSLGAIVSALIAPFYVWWF).

The protein belongs to the PlsY family. As to quaternary structure, probably interacts with PlsX.

The protein localises to the cell inner membrane. It carries out the reaction an acyl phosphate + sn-glycerol 3-phosphate = a 1-acyl-sn-glycero-3-phosphate + phosphate. It participates in lipid metabolism; phospholipid metabolism. Functionally, catalyzes the transfer of an acyl group from acyl-phosphate (acyl-PO(4)) to glycerol-3-phosphate (G3P) to form lysophosphatidic acid (LPA). This enzyme utilizes acyl-phosphate as fatty acyl donor, but not acyl-CoA or acyl-ACP. The chain is Glycerol-3-phosphate acyltransferase from Sodalis glossinidius (strain morsitans).